A 1218-amino-acid polypeptide reads, in one-letter code: MLCFDSERMNWYYHVLARRPYLVVVSIAVYCVACIIVALVLNKLPDFSDPTLGFETRGTKIGERLTAWYNLLQETDHHGALFSNPSDLWERRRVEQGYVETKLHPNHRRRKNKHKNRNKNKRRKEQNQSSHEHHDVAQKMMQFKKRLKATSSPSPNLGFDTWIGDSGVFRDYEITNDSASSSLEPTRRTEQIEYGHNTTSVDEEEHQQRVQTKKSTWRLLKQAATLPTDGWADMHRRQPIEGFFCDSSPRKEYSHFVVQRIGPNATDSLFDLNGLLAMCQLQDQITEVPSYRAFCEPEMLTTECCRPWSLPNYAAMLANKSSCFDLTTEDVTSLHTLLLGCYEYFHDLKMDNHCNEIPHCRAPEECKRLNIVFNVLNFLTDFSFIKSNDSNVYLKYAMIFIPVAQSNRLLPLFHEWEDVELINELVEVVAMDLGLENELFNELLLTDVWLVSLGGTFVMASVWLYTGSAFITLMSCVAICFSLGLAYFFYAIVLEFEFFPYMNLLAVVVIIGIGADDVFLFLKIWHCVLTERFSNRCTLTTQSQSALPTLENSDHTESLENIMALTMRHAAASMFVTSLTTAGAFYASYSSSITAIKCFGIFAGTVVVTNYLLMITWLPASVSIMERLFATRMSCHHPMSIKLIHACKKSINRFCQMFEECITKSIMNYAYLWLLIFGALGASSAVIVFWYPGLQLPEKSHFQLFVSKHPFEVYSSLKQQFWFEKPLQAYENFKMHMHFVWGVQAVDDGDYTNPNSYGHLHYDNNFNVSSRPAQLWILDFCQSVRQQPFYKETLGMLLPNCFIENLIDYMKRRCIDDMDSTRKDRSPCCDAQFPFEPHIFEYCLPQSISNMYDTTFFRPGVAGPKFAEAPRLETEDYLGMSGNESAEYSTNGSFTPLLVKALVIEFESNVAYSTIYANIRQFYESVEHWFQMQLKTAPPELQGGWFTSDLKFYNVQDTLSHDTFVAICLAMAASLAVLLCFTVNILISIYAVLTVSLSIFNTVAVLILLGWQLNILESIAVSTAIGLAVDFSLHYGIHYRMSPVKERLAATQFVLSRIIGPTVMAATTTGLAGGIMMASNILPYIQIGVFLVVVMIVSWFYATFFLMSLLRVAGPQHGFLELKWPLWSKRSSGSSKFYERKPSQVIASEQLLTPTSSAIVELANSETHELESLNSNSLIKTISGIESAHALSSLPRDFEHSFQTMHECKYQTYPSTSN.

The helical transmembrane segment at 21 to 41 threads the bilayer; sequence YLVVVSIAVYCVACIIVALVL. The segment at 99-135 is disordered; sequence VETKLHPNHRRRKNKHKNRNKNKRRKEQNQSSHEHHD. Over residues 104–124 the composition is skewed to basic residues; it reads HPNHRRRKNKHKNRNKNKRRK. Asn127, Asn176, Asn197, Asn264, Asn319, and Asn388 each carry an N-linked (GlcNAc...) asparagine glycan. The 195-residue stretch at 430-624 folds into the SSD domain; the sequence is AMDLGLENEL…ITWLPASVSI (195 aa). 6 helical membrane passes run 443-463, 473-493, 504-524, 570-590, 598-618, and 670-690; these read LLLT…ASVW, LMSC…YAIV, LLAV…FLKI, AAAS…ASYS, CFGI…ITWL, and AYLW…IVFW. Asn767, Asn883, and Asn891 each carry an N-linked (GlcNAc...) asparagine glycan. The next 5 helical transmembrane spans lie at 975–995, 996–1016, 1019–1039, 1058–1078, and 1087–1107; these read LAVL…VLTV, SLSI…LNIL, IAVS…GIHY, IIGP…IMMA, and IGVF…FFLM.

Belongs to the dispatched family.

Its subcellular location is the membrane. Its function is as follows. Segment polarity protein which functions in hedgehog (Hh) signaling. Regulates the trafficking and the release of cholesterol-modified hedgehog protein from cells of the posterior compartment (P cells) and is hence required for the effective production of the Hh signal. This chain is Protein dispatched (disp), found in Drosophila melanogaster (Fruit fly).